A 319-amino-acid chain; its full sequence is tRNA U34 carboxymethyltransferase (319 aa).

Residues lysine 88, tryptophan 102, lysine 107, glycine 126, 176-177 (LE), methionine 192, tyrosine 196, and arginine 311 each bind carboxy-S-adenosyl-L-methionine.

It belongs to the class I-like SAM-binding methyltransferase superfamily. CmoB family. Homotetramer.

The catalysed reaction is carboxy-S-adenosyl-L-methionine + 5-hydroxyuridine(34) in tRNA = 5-carboxymethoxyuridine(34) in tRNA + S-adenosyl-L-homocysteine + H(+). Catalyzes carboxymethyl transfer from carboxy-S-adenosyl-L-methionine (Cx-SAM) to 5-hydroxyuridine (ho5U) to form 5-carboxymethoxyuridine (cmo5U) at position 34 in tRNAs. The protein is tRNA U34 carboxymethyltransferase of Azotobacter vinelandii (strain DJ / ATCC BAA-1303).